The chain runs to 137 residues: Small ribosomal subunit protein bS6 (137 aa).

The tract at residues 99 to 137 (LSPMKAAESREDRRSGGDDRPRRSADSEERQSASQDEEE) is disordered. A compositionally biased stretch (basic and acidic residues) spans 105 to 129 (AESREDRRSGGDDRPRRSADSEERQ).

This sequence belongs to the bacterial ribosomal protein bS6 family.

Its function is as follows. Binds together with bS18 to 16S ribosomal RNA. The polypeptide is Small ribosomal subunit protein bS6 (Marinobacter nauticus (strain ATCC 700491 / DSM 11845 / VT8) (Marinobacter aquaeolei)).